The following is a 235-amino-acid chain: Transcriptional regulatory protein CseB (235 aa).

A Response regulatory domain is found at 6-119 (HVLFVEDDDV…VLVARIRAVL (114 aa)). 4-aspartylphosphate is present on Asp-55. A DNA-binding region (ompR/PhoB-type) is located at residues 141–235 (GGVLTFGELE…VRGFGYKLKA (95 aa)).

In terms of processing, phosphorylated by CseC.

The protein localises to the cytoplasm. Functionally, member of the two-component regulatory system CseB/CseC involved in the stability of the cell envelope. CseB activates transcription of RNA polymerase sigma-E factor, in response to changes in the cell envelope. This Streptomyces avermitilis (strain ATCC 31267 / DSM 46492 / JCM 5070 / NBRC 14893 / NCIMB 12804 / NRRL 8165 / MA-4680) protein is Transcriptional regulatory protein CseB (cseB).